A 415-amino-acid chain; its full sequence is Thyroxine-binding globulin (415 aa).

An N-terminal signal peptide occupies residues 1–20; sequence MSPFLYLVLLVLGLHATIHC. 4 N-linked (GlcNAc...) asparagine glycosylation sites follow: asparagine 36, asparagine 99, asparagine 165, and asparagine 253. Thyroxine contacts are provided by asparagine 293 and arginine 398.

Belongs to the serpin family.

It is found in the secreted. In terms of biological role, major thyroid hormone transport protein in serum. The protein is Thyroxine-binding globulin (SERPINA7) of Pan troglodytes (Chimpanzee).